The sequence spans 128 residues: Ribosome-binding factor A (128 aa).

Belongs to the RbfA family. In terms of assembly, monomer. Binds 30S ribosomal subunits, but not 50S ribosomal subunits or 70S ribosomes.

It is found in the cytoplasm. Functionally, one of several proteins that assist in the late maturation steps of the functional core of the 30S ribosomal subunit. Associates with free 30S ribosomal subunits (but not with 30S subunits that are part of 70S ribosomes or polysomes). Required for efficient processing of 16S rRNA. May interact with the 5'-terminal helix region of 16S rRNA. The sequence is that of Ribosome-binding factor A from Haemophilus influenzae (strain ATCC 51907 / DSM 11121 / KW20 / Rd).